Here is a 377-residue protein sequence, read N- to C-terminus: Nitric oxide reductase FlRd-NAD(+) reductase (377 aa).

The protein belongs to the FAD-dependent oxidoreductase family. FAD serves as cofactor.

The protein localises to the cytoplasm. The catalysed reaction is 2 reduced [nitric oxide reductase rubredoxin domain] + NAD(+) + H(+) = 2 oxidized [nitric oxide reductase rubredoxin domain] + NADH. The protein operates within nitrogen metabolism; nitric oxide reduction. Functionally, one of at least two accessory proteins for anaerobic nitric oxide (NO) reductase. Reduces the rubredoxin moiety of NO reductase. This is Nitric oxide reductase FlRd-NAD(+) reductase from Salmonella newport (strain SL254).